Consider the following 377-residue polypeptide: MSNGIVIIGSGFAARQLVKNIRKQDASIPLTLIAADSMDEYNKPDLSHVISQGQRADDLTRQTAGEFAEQFNLHLFPQTWVTDIDAEARVVKSQNNQWQYDKLVLATGASAFVPPVPGRELMLTLNSQQEYRACETQLRDARRVLIVGGGLIGSELAMDFCRAGKAVTLIDNAASILASLMPPEVSSRLQHRLTEMGVHLLLKSQLQGLEKTDSGILATLDRQRSIEVDAVIAATGLRPETALARRAGLTINRGVCVDSYLQTSNTDIYALGDCAEINGQVLPFLQPIQLSAMVLAKNLLGNNTPLKLPAMLVKIKTPELPLHLAGETQRQDLRWQINTERQGMVARGVDDADQLRAFVVSEDRMKEAFGLLKTLPM.

This sequence belongs to the FAD-dependent oxidoreductase family. The cofactor is FAD.

It is found in the cytoplasm. It catalyses the reaction 2 reduced [nitric oxide reductase rubredoxin domain] + NAD(+) + H(+) = 2 oxidized [nitric oxide reductase rubredoxin domain] + NADH. The protein operates within nitrogen metabolism; nitric oxide reduction. Functionally, one of at least two accessory proteins for anaerobic nitric oxide (NO) reductase. Reduces the rubredoxin moiety of NO reductase. This chain is Nitric oxide reductase FlRd-NAD(+) reductase, found in Escherichia coli O9:H4 (strain HS).